Reading from the N-terminus, the 189-residue chain is Elongation factor P (189 aa).

The protein belongs to the elongation factor P family.

It localises to the cytoplasm. It participates in protein biosynthesis; polypeptide chain elongation. In terms of biological role, involved in peptide bond synthesis. Stimulates efficient translation and peptide-bond synthesis on native or reconstituted 70S ribosomes in vitro. Probably functions indirectly by altering the affinity of the ribosome for aminoacyl-tRNA, thus increasing their reactivity as acceptors for peptidyl transferase. The protein is Elongation factor P of Orientia tsutsugamushi (strain Ikeda) (Rickettsia tsutsugamushi).